The chain runs to 75 residues: MEIGLAIGLIVGLSILFTIVGLVVGFFLTKRYFEKQLRENPPINEKMIRAMFLQMGRKPSESHIKSVMRSMKNAK.

A helical transmembrane segment spans residues 7-27 (IGLIVGLSILFTIVGLVVGFF).

This sequence belongs to the UPF0154 family.

It localises to the cell membrane. This is UPF0154 protein MMOB4450 from Mycoplasma mobile (strain ATCC 43663 / 163K / NCTC 11711) (Mesomycoplasma mobile).